Consider the following 55-residue polypeptide: Small ribosomal subunit protein uS14 (55 aa).

Residues Cys20, Cys23, Cys38, and Cys41 each contribute to the Zn(2+) site.

This sequence belongs to the universal ribosomal protein uS14 family. Requires Zn(2+) as cofactor.

The polypeptide is Small ribosomal subunit protein uS14 (rps29) (Dictyostelium discoideum (Social amoeba)).